Reading from the N-terminus, the 343-residue chain is Dual oxidase maturation factor 1 (343 aa).

The Extracellular segment spans residues 1–24 (MATLGHTFPFYAGPKPTFPMDTTL). A helical membrane pass occupies residues 25-45 (ASIIMIFLTALATFIVILPGI). At 46–51 (RGKTRL) the chain is on the cytoplasmic side. Residues 52–72 (FWLLRVVTSLFIGAAILAVNF) traverse the membrane as a helical segment. Residues 73–183 (SSEWSVGQVS…RLAGHYTSAM (111 aa)) are Extracellular-facing. N-linked (GlcNAc...) asparagine glycosylation is found at asparagine 84, asparagine 109, and asparagine 121. A helical transmembrane segment spans residues 184–204 (LWVAFLCWLLANVMLSMPVLV). Residues 205–206 (YG) are Cytoplasmic-facing. The chain crosses the membrane as a helical span at residues 207-227 (GYMLLATGIFQLLALLFFSMA). Residues 228–249 (TSLTSPCPLHLGASVLHTHHGP) lie on the Extracellular side of the membrane. The chain crosses the membrane as a helical span at residues 250 to 270 (AFWITLTTGLLCVLLGLAMAV). Over 271–343 (AHRMQPHRLK…AHPKDPDCAL (73 aa)) the chain is Cytoplasmic. Residues 306 to 343 (RYRSMADSPKSQDIPLSEASSTKAYCKEAHPKDPDCAL) form a disordered region. Positions 330–343 (YCKEAHPKDPDCAL) are enriched in basic and acidic residues.

It belongs to the DUOXA family. In terms of assembly, may interact with NUMB. In terms of tissue distribution, specifically expressed in thyroid gland. Also detected in esophagus.

The protein resides in the membrane. Its function is as follows. May be required for the maturation and the transport from the endoplasmic reticulum to the plasma membrane of functional DUOX1. The sequence is that of Dual oxidase maturation factor 1 (DUOXA1) from Homo sapiens (Human).